The chain runs to 279 residues: Diaminopimelate epimerase (279 aa).

Positions 14 and 68 each coordinate substrate. The active-site Proton donor is Cys-77. Residues 78–79 (GN), Asn-191, and 207–208 (ER) contribute to the substrate site. The active-site Proton acceptor is the Cys-217. 218-219 (GT) is a substrate binding site.

Belongs to the diaminopimelate epimerase family. As to quaternary structure, homodimer.

It localises to the cytoplasm. The catalysed reaction is (2S,6S)-2,6-diaminopimelate = meso-2,6-diaminopimelate. It functions in the pathway amino-acid biosynthesis; L-lysine biosynthesis via DAP pathway; DL-2,6-diaminopimelate from LL-2,6-diaminopimelate: step 1/1. Functionally, catalyzes the stereoinversion of LL-2,6-diaminopimelate (L,L-DAP) to meso-diaminopimelate (meso-DAP), a precursor of L-lysine. The protein is Diaminopimelate epimerase of Methanothrix thermoacetophila (strain DSM 6194 / JCM 14653 / NBRC 101360 / PT) (Methanosaeta thermophila).